The following is a 543-amino-acid chain: Protein lin-9 homolog (543 aa).

Residues Arg-21–Val-82 are disordered. Residues Ser-24–Arg-55 show a composition bias toward polar residues. Residues Ile-355–Ser-451 are a coiled coil.

It belongs to the lin-9 family. Component of the DREAM complex.

Its subcellular location is the nucleus. The protein is Protein lin-9 homolog (lin9) of Danio rerio (Zebrafish).